Here is a 638-residue protein sequence, read N- to C-terminus: Threonine--tRNA ligase (638 aa).

Residues 1 to 61 (MPNITLPDGS…EADTPLAIVT (61 aa)) enclose the TGS domain. The tract at residues 242 to 533 (DHRKLGRLLD…LIEHYAGALP (292 aa)) is catalytic. Zn(2+) is bound by residues Cys-333, His-384, and His-510.

Belongs to the class-II aminoacyl-tRNA synthetase family. In terms of assembly, homodimer. It depends on Zn(2+) as a cofactor.

Its subcellular location is the cytoplasm. It catalyses the reaction tRNA(Thr) + L-threonine + ATP = L-threonyl-tRNA(Thr) + AMP + diphosphate + H(+). Functionally, catalyzes the attachment of threonine to tRNA(Thr) in a two-step reaction: L-threonine is first activated by ATP to form Thr-AMP and then transferred to the acceptor end of tRNA(Thr). Also edits incorrectly charged L-seryl-tRNA(Thr). This chain is Threonine--tRNA ligase, found in Aromatoleum aromaticum (strain DSM 19018 / LMG 30748 / EbN1) (Azoarcus sp. (strain EbN1)).